We begin with the raw amino-acid sequence, 442 residues long: Coiled-coil domain-containing protein 112 (442 aa).

2 coiled-coil regions span residues 23-116 (LEEL…RRIE) and 217-249 (LEEK…VDTV). Disordered regions lie at residues 245–272 (KVDT…KKQK), 289–312 (KLAS…QRQS), and 392–442 (EKVE…RQGI). Basic and acidic residues-rich tracts occupy residues 256 to 268 (KAED…EEQR) and 294 to 310 (LREE…ERQR). A coiled-coil region spans residues 281 to 400 (RKSLEMSAKL…KEKVENNVSR (120 aa)).

The protein resides in the cytoplasm. Its subcellular location is the cytoskeleton. The protein localises to the microtubule organizing center. It is found in the centrosome. It localises to the centriolar satellite. This is Coiled-coil domain-containing protein 112 (Ccdc112) from Mus musculus (Mouse).